The chain runs to 740 residues: Dipeptidyl peptidase family member 6 (740 aa).

Position 1 (methionine 1) is a topological domain, cytoplasmic. The chain crosses the membrane as a helical; Signal-anchor for type II membrane protein span at residues 2–22; it reads LFLPILILNLLIITHAIDIIP. Topologically, residues 23 to 740 are lumenal; the sequence is REVLFQDPKY…VMNRIFPVQG (718 aa). N-linked (GlcNAc...) asparagine glycans are attached at residues asparagine 108, asparagine 308, and asparagine 506. Active-site charge relay system residues include serine 516, aspartate 604, and histidine 636. Cysteine 535 and cysteine 658 are joined by a disulfide. A glycan (N-linked (GlcNAc...) asparagine) is linked at asparagine 672.

Belongs to the peptidase S9B family. DPPIV subfamily.

The protein localises to the cell membrane. Its function is as follows. Removes N-terminal dipeptides sequentially from polypeptides. Essential for control of distal tip cell migration. The protein is Dipeptidyl peptidase family member 6 (dpf-6) of Caenorhabditis elegans.